A 188-amino-acid chain; its full sequence is Elongation factor P (188 aa).

Position 34 is an N6-(3,6-diaminohexanoyl)-5-hydroxylysine (Lys34).

The protein belongs to the elongation factor P family. May be beta-lysylated on the epsilon-amino group of Lys-34 by the combined action of EpmA and EpmB, and then hydroxylated on the C5 position of the same residue by EpmC (if this protein is present). Lysylation is critical for the stimulatory effect of EF-P on peptide-bond formation. The lysylation moiety may extend toward the peptidyltransferase center and stabilize the terminal 3-CCA end of the tRNA. Hydroxylation of the C5 position on Lys-34 may allow additional potential stabilizing hydrogen-bond interactions with the P-tRNA.

It localises to the cytoplasm. It functions in the pathway protein biosynthesis; polypeptide chain elongation. Its function is as follows. Involved in peptide bond synthesis. Alleviates ribosome stalling that occurs when 3 or more consecutive Pro residues or the sequence PPG is present in a protein, possibly by augmenting the peptidyl transferase activity of the ribosome. Modification of Lys-34 is required for alleviation. The sequence is that of Elongation factor P from Glaesserella parasuis serovar 5 (strain SH0165) (Haemophilus parasuis).